The following is a 177-amino-acid chain: Phycocyanin PC645 beta subunit (177 aa).

Y18 lines the mesobiliverdin pocket. Residues K28, N35, and D39 each coordinate (2R,3E)-phycocyanobilin. C50, D54, and C61 together coordinate 15,16-dihydrobiliverdin. The (2R,3E)-phycocyanobilin site is built by N72, R77, C82, R84, and D85. A 15,16-dihydrobiliverdin-binding site is contributed by Q148. P154, G156, and C158 together coordinate (2R,3E)-phycocyanobilin.

Belongs to the phycobiliprotein family. As to quaternary structure, heterotetramer of 2 different alpha chains and 2 identical beta chains which form 2 alpha-beta heterodimers within the heterotetramer. Post-translationally, contains two phycocyanobilin chromophores, one mesobiliverdin chromophore and one 15,16-dihydrobiliverdin chromophore with binding mediated by both the alpha and beta subunits.

The protein localises to the plastid. It localises to the chloroplast thylakoid membrane. Functionally, light-harvesting photosynthetic tetrapyrrole chromophore-protein from the phycobiliprotein complex. This Chroomonas sp. (strain CCMP270) protein is Phycocyanin PC645 beta subunit.